The chain runs to 929 residues: Bifunctional glutamine synthetase adenylyltransferase/adenylyl-removing enzyme (929 aa).

The segment at 1–423 is adenylyl removase; that stretch reads MSTPIDSSRA…RHFEQIFAAR (423 aa). The adenylyl transferase stretch occupies residues 433-929; that stretch reads ARIRPEQSGD…FQLWEDIFGT (497 aa).

It belongs to the GlnE family. The cofactor is Mg(2+).

It catalyses the reaction [glutamine synthetase]-O(4)-(5'-adenylyl)-L-tyrosine + phosphate = [glutamine synthetase]-L-tyrosine + ADP. The enzyme catalyses [glutamine synthetase]-L-tyrosine + ATP = [glutamine synthetase]-O(4)-(5'-adenylyl)-L-tyrosine + diphosphate. In terms of biological role, involved in the regulation of glutamine synthetase GlnA, a key enzyme in the process to assimilate ammonia. When cellular nitrogen levels are high, the C-terminal adenylyl transferase (AT) inactivates GlnA by covalent transfer of an adenylyl group from ATP to specific tyrosine residue of GlnA, thus reducing its activity. Conversely, when nitrogen levels are low, the N-terminal adenylyl removase (AR) activates GlnA by removing the adenylyl group by phosphorolysis, increasing its activity. The regulatory region of GlnE binds the signal transduction protein PII (GlnB) which indicates the nitrogen status of the cell. The chain is Bifunctional glutamine synthetase adenylyltransferase/adenylyl-removing enzyme from Nitrosomonas europaea (strain ATCC 19718 / CIP 103999 / KCTC 2705 / NBRC 14298).